The chain runs to 207 residues: MGGKWSKSSIVGWPQIRERIRQTPVAAEGVGAVSQDLARHGAITSSNTATNNPDCAWLEAQEEDSDVGFPVRPQVPLRPMTYKAAFDLSFFLKEKGGLDGLIYSKRRQDILDLWVYNTQGFFPDWQNYTPGPGTRLPLTFGWCFKLVPMDPAEIEEANKGENISLLHPICQHGMEDEDREVLVWRFNSSLARRHLARELHPEYYKDC.

A lipid anchor (N-myristoyl glycine; by host) is attached at Gly-2. A Phosphoserine; by host modification is found at Ser-6. The acidic; interacts with host PACS1 and PACS2; stabilizes the interaction of NEF/MHC-I with host AP1M1; necessary for MHC-I internalization stretch occupies residues 62 to 66; it reads EEDSD. The segment at 70 to 79 is SH3-binding; interaction with Src family tyrosine kinases; that stretch reads PVRPQVPLRP. A PxxP; stabilizes the interaction of NEF/MHC-I with host AP1M1; necessary for MHC-I internalization motif is present at residues 73–76; that stretch reads PQVP. Residues 109–125 are mediates dimerization, Nef-PTE1 interaction; that stretch reads DILDLWVYNTQGFFPDW. The interval 149–181 is binding to ATP6V1H; sequence MDPAEIEEANKGENISLLHPICQHGMEDEDREV. A Dileucine internalization motif; necessary for CD4 internalization motif is present at residues 165–166; sequence LL. Positions 175–176 match the Diacidic; necessary for CD4 internalization motif; the sequence is ED.

Belongs to the lentivirus primate group Nef protein family. As to quaternary structure, monomer; cytosolic form. Homodimer; membrane bound form. Interacts with Nef associated p21-activated kinase (PAK2); this interaction activates PAK2. Associates with the Nef-MHC-I-AP1 complex; this complex is required for MHC-I internalization. Interacts (via C-terminus) with host PI3-kinase. Interacts with host PACS1; this interaction seems to be weak. Interacts with host PACS2. Interacts with host LCK and MAPK3; these interactions inhibit the kinase activity of the latter. Interacts with host ATP6V1H; this interaction may play a role in CD4 endocytosis. Associates with the CD4-Nef-AP2 complex; this complex is required for CD4 internalization. Interacts with host AP2 subunit alpha and AP2 subunit sigma2. Interacts with TCR-zeta chain; this interaction up-regulates the Fas ligand (FasL) surface expression. Interacts with host HCK, LYN, and SRC; these interactions activate the Src family kinases. Interacts with MAP3K5; this interaction inhibits the Fas and TNFR-mediated death signals. Interacts with beta-COP and PTE1. Interacts with human RACK1; this increases Nef phosphorylation by PKC. Interacts with TP53; this interaction decreases the half-life of TP53, protecting the infected cell against p53-mediated apoptosis. The virion-associated Nef proteins are cleaved by the viral protease to release the soluble C-terminal core protein. Nef is probably cleaved concomitantly with viral structural proteins on maturation of virus particles. In terms of processing, myristoylated. Post-translationally, phosphorylated on serine residues, probably by host PKCdelta and theta.

Its subcellular location is the host cell membrane. It is found in the virion. The protein resides in the secreted. It localises to the host Golgi apparatus membrane. Functionally, factor of infectivity and pathogenicity, required for optimal virus replication. Alters numerous pathways of T-lymphocyte function and down-regulates immunity surface molecules in order to evade host defense and increase viral infectivity. Alters the functionality of other immunity cells, like dendritic cells, monocytes/macrophages and NK cells. In terms of biological role, in infected CD4(+) T-lymphocytes, down-regulates the surface MHC-I, mature MHC-II, CD4, CD28, CCR5 and CXCR4 molecules. Mediates internalization and degradation of host CD4 through the interaction of with the cytoplasmic tail of CD4, the recruitment of AP-2 (clathrin adapter protein complex 2), internalization through clathrin coated pits, and subsequent transport to endosomes and lysosomes for degradation. Diverts host MHC-I molecules to the trans-Golgi network-associated endosomal compartments by an endocytic pathway to finally target them for degradation. MHC-I down-regulation may involve AP-1 (clathrin adapter protein complex 1) or possibly Src family kinase-ZAP70/Syk-PI3K cascade recruited by PACS2. In consequence infected cells are masked for immune recognition by cytotoxic T-lymphocytes. Decreasing the number of immune receptors also prevents reinfection by more HIV particles (superinfection). Down-regulates host SERINC3 and SERINC5 thereby excluding these proteins from the viral particles. Virion infectivity is drastically higher when SERINC3 or SERINC5 are excluded from the viral envelope, because these host antiviral proteins impair the membrane fusion event necessary for subsequent virion penetration. Bypasses host T-cell signaling by inducing a transcriptional program nearly identical to that of anti-CD3 cell activation. Interaction with TCR-zeta chain up-regulates the Fas ligand (FasL). Increasing surface FasL molecules and decreasing surface MHC-I molecules on infected CD4(+) cells send attacking cytotoxic CD8+ T-lymphocytes into apoptosis. Its function is as follows. Plays a role in optimizing the host cell environment for viral replication without causing cell death by apoptosis. Protects the infected cells from apoptosis in order to keep them alive until the next virus generation is ready to strike. Inhibits the Fas and TNFR-mediated death signals by blocking MAP3K5/ASK1. Decreases the half-life of TP53, protecting the infected cell against p53-mediated apoptosis. Inhibits the apoptotic signals regulated by the Bcl-2 family proteins through the formation of a Nef/PI3-kinase/PAK2 complex that leads to activation of PAK2 and induces phosphorylation of host BAD. Functionally, extracellular Nef protein targets CD4(+) T-lymphocytes for apoptosis by interacting with CXCR4 surface receptors. The sequence is that of Protein Nef from Homo sapiens (Human).